The sequence spans 349 residues: UDP-3-O-acylglucosamine N-acyltransferase (349 aa).

The Proton acceptor role is filled by histidine 240.

This sequence belongs to the transferase hexapeptide repeat family. LpxD subfamily. In terms of assembly, homotrimer.

The enzyme catalyses a UDP-3-O-[(3R)-3-hydroxyacyl]-alpha-D-glucosamine + a (3R)-hydroxyacyl-[ACP] = a UDP-2-N,3-O-bis[(3R)-3-hydroxyacyl]-alpha-D-glucosamine + holo-[ACP] + H(+). Its pathway is bacterial outer membrane biogenesis; LPS lipid A biosynthesis. In terms of biological role, catalyzes the N-acylation of UDP-3-O-acylglucosamine using 3-hydroxyacyl-ACP as the acyl donor. Is involved in the biosynthesis of lipid A, a phosphorylated glycolipid that anchors the lipopolysaccharide to the outer membrane of the cell. The polypeptide is UDP-3-O-acylglucosamine N-acyltransferase (Porphyromonas gingivalis (strain ATCC 33277 / DSM 20709 / CIP 103683 / JCM 12257 / NCTC 11834 / 2561)).